Here is a 129-residue protein sequence, read N- to C-terminus: Small ribosomal subunit protein uS11 (129 aa).

The protein belongs to the universal ribosomal protein uS11 family. As to quaternary structure, part of the 30S ribosomal subunit. Interacts with proteins S7 and S18. Binds to IF-3.

Located on the platform of the 30S subunit, it bridges several disparate RNA helices of the 16S rRNA. Forms part of the Shine-Dalgarno cleft in the 70S ribosome. The chain is Small ribosomal subunit protein uS11 from Hahella chejuensis (strain KCTC 2396).